Here is a 26-residue protein sequence, read N- to C-terminus: uncharacterized protein (26 aa).

This is an uncharacterized protein from Saccharomyces cerevisiae (strain ATCC 204508 / S288c) (Baker's yeast).